Here is a 221-residue protein sequence, read N- to C-terminus: ATP phosphoribosyltransferase (221 aa).

It belongs to the ATP phosphoribosyltransferase family. Short subfamily. Heteromultimer composed of HisG and HisZ subunits.

The protein resides in the cytoplasm. The catalysed reaction is 1-(5-phospho-beta-D-ribosyl)-ATP + diphosphate = 5-phospho-alpha-D-ribose 1-diphosphate + ATP. It functions in the pathway amino-acid biosynthesis; L-histidine biosynthesis; L-histidine from 5-phospho-alpha-D-ribose 1-diphosphate: step 1/9. Catalyzes the condensation of ATP and 5-phosphoribose 1-diphosphate to form N'-(5'-phosphoribosyl)-ATP (PR-ATP). Has a crucial role in the pathway because the rate of histidine biosynthesis seems to be controlled primarily by regulation of HisG enzymatic activity. This is ATP phosphoribosyltransferase from Rhizorhabdus wittichii (strain DSM 6014 / CCUG 31198 / JCM 15750 / NBRC 105917 / EY 4224 / RW1) (Sphingomonas wittichii).